The sequence spans 596 residues: Deuterosome assembly protein 1 (596 aa).

3 coiled-coil regions span residues 8-68 (IARN…NHEI), 130-180 (CELQ…FQKE), and 227-284 (IENL…DLLR). The span at 297-306 (TANLANQKTA) shows a compositional bias: polar residues. The segment at 297–316 (TANLANQKTAQGEEASFQVT) is disordered. Positions 337-402 (SEKYQAENDL…LKGAQNRQTS (66 aa)) form a coiled coil. Residues 447 to 467 (DKPQKHRSFHGENNSLKPTNY) form a disordered region. Over residues 457–467 (GENNSLKPTNY) the composition is skewed to polar residues.

Belongs to the CEP63 family.

It is found in the cytoplasm. Functionally, key structural component of the deuterosome, a structure that promotes de novo centriole amplification in multiciliated cells. Deuterosome-mediated centriole amplification occurs in terminally differentiated multiciliated cells and can generate more than 100 centrioles. Probably sufficient for the specification and formation of the deuterosome inner core. The polypeptide is Deuterosome assembly protein 1 (Xenopus tropicalis (Western clawed frog)).